Reading from the N-terminus, the 950-residue chain is Glycine dehydrogenase (decarboxylating) (950 aa).

The residue at position 698 (Lys698) is an N6-(pyridoxal phosphate)lysine.

The protein belongs to the GcvP family. As to quaternary structure, the glycine cleavage system is composed of four proteins: P, T, L and H. It depends on pyridoxal 5'-phosphate as a cofactor.

It catalyses the reaction N(6)-[(R)-lipoyl]-L-lysyl-[glycine-cleavage complex H protein] + glycine + H(+) = N(6)-[(R)-S(8)-aminomethyldihydrolipoyl]-L-lysyl-[glycine-cleavage complex H protein] + CO2. Its function is as follows. The glycine cleavage system catalyzes the degradation of glycine. The P protein binds the alpha-amino group of glycine through its pyridoxal phosphate cofactor; CO(2) is released and the remaining methylamine moiety is then transferred to the lipoamide cofactor of the H protein. This is Glycine dehydrogenase (decarboxylating) from Neisseria meningitidis serogroup C (strain 053442).